A 343-amino-acid chain; its full sequence is Anthranilate phosphoribosyltransferase (343 aa).

5-phospho-alpha-D-ribose 1-diphosphate-binding positions include Gly84, 87-88 (GD), Thr92, 94-97 (NIST), 112-120 (KHGNRGVSS), and Ser124. Residue Gly84 participates in anthranilate binding. Ser96 is a binding site for Mg(2+). Asn115 is a binding site for anthranilate. Arg170 contributes to the anthranilate binding site. Asp229 and Glu230 together coordinate Mg(2+).

The protein belongs to the anthranilate phosphoribosyltransferase family. As to quaternary structure, homodimer. Mg(2+) serves as cofactor.

It catalyses the reaction N-(5-phospho-beta-D-ribosyl)anthranilate + diphosphate = 5-phospho-alpha-D-ribose 1-diphosphate + anthranilate. Its pathway is amino-acid biosynthesis; L-tryptophan biosynthesis; L-tryptophan from chorismate: step 2/5. Its function is as follows. Catalyzes the transfer of the phosphoribosyl group of 5-phosphorylribose-1-pyrophosphate (PRPP) to anthranilate to yield N-(5'-phosphoribosyl)-anthranilate (PRA). The protein is Anthranilate phosphoribosyltransferase of Burkholderia cenocepacia (strain ATCC BAA-245 / DSM 16553 / LMG 16656 / NCTC 13227 / J2315 / CF5610) (Burkholderia cepacia (strain J2315)).